We begin with the raw amino-acid sequence, 73 residues long: Toxin Td7 (73 aa).

The N-terminal stretch at 1–7 (IGMAVEC) is a signal peptide. The LCN-type CS-alpha/beta domain maps to 8–70 (KDGYLVGADG…VWDSATNRCG (63 aa)). Disulfide bonds link Cys18–Cys69, Cys22–Cys44, Cys30–Cys50, and Cys34–Cys52. Lys71 carries the post-translational modification Lysine amide.

This sequence belongs to the long (4 C-C) scorpion toxin superfamily. Sodium channel inhibitor family. Beta subfamily. In terms of tissue distribution, expressed by the venom gland.

It localises to the secreted. Functionally, beta toxins bind voltage-independently at site-4 of sodium channels (Nav) and shift the voltage of activation toward more negative potentials thereby affecting sodium channel activation and promoting spontaneous and repetitive firing. The polypeptide is Toxin Td7 (Tityus discrepans (Venezuelan scorpion)).